The chain runs to 137 residues: Large ribosomal subunit protein uL16 (137 aa).

Belongs to the universal ribosomal protein uL16 family. Part of the 50S ribosomal subunit.

Its function is as follows. Binds 23S rRNA and is also seen to make contacts with the A and possibly P site tRNAs. The chain is Large ribosomal subunit protein uL16 from Xanthomonas campestris pv. campestris (strain 8004).